The chain runs to 443 residues: Protein PRRC1 (443 aa).

Disordered stretches follow at residues 1–108 and 139–206; these read MMEE…LSHF and ITRG…QDDA. The span at 34–46 shows a compositional bias: polar residues; that stretch reads VTSSFSSPNTSGM. A compositionally biased stretch (pro residues) spans 59-80; sequence PSLPPVQPSAPPPFVPLSPAPS. Positions 81 to 96 are enriched in low complexity; that stretch reads TPLSGTSVPPSVSPSP. Residues 169–188 are compositionally biased toward polar residues; it reads ITQQASMTSLAQGPGTTSAI.

This sequence belongs to the PRRC1 family. Interacts with PRKAR1A; resulting in PKA activation.

It localises to the golgi apparatus. The protein resides in the cytoplasm. May act as a regulator of the protein kinase A (PKA) during embryonic development. The sequence is that of Protein PRRC1 (Prrc1) from Rattus norvegicus (Rat).